A 163-amino-acid polypeptide reads, in one-letter code: Large ribosomal subunit protein bL17 (163 aa).

The tract at residues 127-163 (KEVKKAKSRRGGKAKKAEGTAPEAPAAESESTTEASE) is disordered. Basic residues predominate over residues 128-140 (EVKKAKSRRGGKA). A compositionally biased stretch (low complexity) spans 145 to 163 (GTAPEAPAAESESTTEASE).

It belongs to the bacterial ribosomal protein bL17 family. In terms of assembly, part of the 50S ribosomal subunit. Contacts protein L32.

The polypeptide is Large ribosomal subunit protein bL17 (Flavobacterium johnsoniae (strain ATCC 17061 / DSM 2064 / JCM 8514 / BCRC 14874 / CCUG 350202 / NBRC 14942 / NCIMB 11054 / UW101) (Cytophaga johnsonae)).